Reading from the N-terminus, the 229-residue chain is MIRAIVTDIEGTTSDIRFVHNVLFPYARERLAGFVTAQQYAEPVKTILDNLRRETDAPAASTADLITTLFAFMDEDRKSTALKALQGIIWRDGYLNGDFTGHLYPDVLPALEKWKAQGIDLYVYSSGSVAAQKLLFGYSDEGDITHLFTGYFDTLVGAKREVQSYRNIAEHLGHAPGTILFLSDIHQELDAAEAAGLRTIQLVRGDRDPASHHPQVQRFDDIHPEQIPA.

The interval 207-229 (RDPASHHPQVQRFDDIHPEQIPA) is disordered. A compositionally biased stretch (basic and acidic residues) spans 218-229 (RFDDIHPEQIPA).

This sequence belongs to the HAD-like hydrolase superfamily. MasA/MtnC family. Monomer. It depends on Mg(2+) as a cofactor.

It catalyses the reaction 5-methylsulfanyl-2,3-dioxopentyl phosphate + H2O = 1,2-dihydroxy-5-(methylsulfanyl)pent-1-en-3-one + phosphate. Its pathway is amino-acid biosynthesis; L-methionine biosynthesis via salvage pathway; L-methionine from S-methyl-5-thio-alpha-D-ribose 1-phosphate: step 3/6. It functions in the pathway amino-acid biosynthesis; L-methionine biosynthesis via salvage pathway; L-methionine from S-methyl-5-thio-alpha-D-ribose 1-phosphate: step 4/6. In terms of biological role, bifunctional enzyme that catalyzes the enolization of 2,3-diketo-5-methylthiopentyl-1-phosphate (DK-MTP-1-P) into the intermediate 2-hydroxy-3-keto-5-methylthiopentenyl-1-phosphate (HK-MTPenyl-1-P), which is then dephosphorylated to form the acireductone 1,2-dihydroxy-3-keto-5-methylthiopentene (DHK-MTPene). The polypeptide is Enolase-phosphatase E1 (Klebsiella pneumoniae (strain 342)).